Reading from the N-terminus, the 105-residue chain is Thioredoxin (105 aa).

In terms of domain architecture, Thioredoxin spans 2-105 (VKLIESKEAF…KLEATITEFA (104 aa)). N6-acetyllysine is present on Lys-3. Residue Lys-8 is modified to N6-succinyllysine. Active-site nucleophile residues include Cys-32 and Cys-35. Cys-32 and Cys-35 are joined by a disulfide. Lys-39 carries the N6-acetyllysine modification. 2 positions are modified to S-nitrosocysteine: Cys-62 and Cys-69. Cys-73 carries the post-translational modification S-nitrosocysteine; alternate. Residue Lys-94 is modified to N6-acetyllysine; alternate. Lys-94 carries the post-translational modification N6-succinyllysine; alternate.

The protein belongs to the thioredoxin family. In terms of assembly, homodimer; disulfide-linked. Interacts with TXNIP through the redox-active site. Interacts with MAP3K5 and CASP3. Interacts with APEX1; the interaction stimulates the FOS/JUN AP-1 DNA-binding activity in a redox-dependent manner. Post-translationally, in the fully reduced protein, both Cys-69 and Cys-73 are nitrosylated in response to nitric oxide (NO). When two disulfide bonds are present in the protein, only Cys-73 is nitrosylated. Cys-73 can serve as donor for nitrosylation of target proteins.

Its subcellular location is the nucleus. It localises to the cytoplasm. It is found in the secreted. Participates in various redox reactions through the reversible oxidation of its active center dithiol to a disulfide and catalyzes dithiol-disulfide exchange reactions. Plays a role in the reversible S-nitrosylation of cysteine residues in target proteins, and thereby contributes to the response to intracellular nitric oxide. Nitrosylates the active site Cys of CASP3 in response to nitric oxide (NO), and thereby inhibits caspase-3 activity. Induces the FOS/JUN AP-1 DNA binding activity in ionizing radiation (IR) cells through its oxidation/reduction status and stimulates AP-1 transcriptional activity. This Rattus norvegicus (Rat) protein is Thioredoxin (Txn).